The primary structure comprises 157 residues: uncharacterized protein (157 aa).

A helical transmembrane segment spans residues Leu6 to Leu26. Residues Ala33–Pro157 enclose the Ricin B-type lectin domain.

It localises to the membrane. This is an uncharacterized protein from Mycobacterium tuberculosis (strain CDC 1551 / Oshkosh).